The following is a 151-amino-acid chain: Ribosome maturation factor RimP (151 aa).

The protein belongs to the RimP family.

Its subcellular location is the cytoplasm. Its function is as follows. Required for maturation of 30S ribosomal subunits. This chain is Ribosome maturation factor RimP, found in Vibrio atlanticus (strain LGP32) (Vibrio splendidus (strain Mel32)).